The primary structure comprises 286 residues: Acetyl-coenzyme A carboxylase carboxyl transferase subunit beta (286 aa).

One can recognise a CoA carboxyltransferase N-terminal domain in the interval 28-286 (LMQKCSNCKK…KMHMDGRQLK (259 aa)). Residues C32, C35, C51, and C54 each coordinate Zn(2+). The C4-type zinc finger occupies 32–54 (CSNCKKIYYRKEMVKALQVCPNC).

The protein belongs to the AccD/PCCB family. In terms of assembly, acetyl-CoA carboxylase is a heterohexamer composed of biotin carboxyl carrier protein (AccB), biotin carboxylase (AccC) and two subunits each of ACCase subunit alpha (AccA) and ACCase subunit beta (AccD). The cofactor is Zn(2+).

The protein resides in the cytoplasm. It carries out the reaction N(6)-carboxybiotinyl-L-lysyl-[protein] + acetyl-CoA = N(6)-biotinyl-L-lysyl-[protein] + malonyl-CoA. It participates in lipid metabolism; malonyl-CoA biosynthesis; malonyl-CoA from acetyl-CoA: step 1/1. In terms of biological role, component of the acetyl coenzyme A carboxylase (ACC) complex. Biotin carboxylase (BC) catalyzes the carboxylation of biotin on its carrier protein (BCCP) and then the CO(2) group is transferred by the transcarboxylase to acetyl-CoA to form malonyl-CoA. This Oceanobacillus iheyensis (strain DSM 14371 / CIP 107618 / JCM 11309 / KCTC 3954 / HTE831) protein is Acetyl-coenzyme A carboxylase carboxyl transferase subunit beta.